The primary structure comprises 193 residues: Iron-sulfur flavoprotein MJ1083 (193 aa).

Residues Cys47, Cys50, Cys53, and Cys59 each coordinate [4Fe-4S] cluster.

It belongs to the SsuE family. Isf subfamily. As to quaternary structure, homodimer. It depends on FMN as a cofactor. [4Fe-4S] cluster serves as cofactor.

Its function is as follows. Redox-active protein probably involved in electron transport. This chain is Iron-sulfur flavoprotein MJ1083, found in Methanocaldococcus jannaschii (strain ATCC 43067 / DSM 2661 / JAL-1 / JCM 10045 / NBRC 100440) (Methanococcus jannaschii).